Reading from the N-terminus, the 245-residue chain is Balbiani ring A 28 kDa protein (245 aa).

The first 16 residues, 1 to 16 (MKSIIKHILFVVLLIS), serve as a signal peptide directing secretion. A phosphoserine mark is found at Ser-33, Ser-40, Ser-92, Ser-93, and Ser-115.

Salivary gland.

The protein resides in the secreted. Functionally, used by the larvae to construct a supramolecular structure, the larval tube. In Chironomus thummi thummi (Midge), this protein is Balbiani ring A 28 kDa protein.